The primary structure comprises 133 residues: Agouti-signaling protein (133 aa).

Residues 1 to 22 form the signal peptide; that stretch reads MDVIHLFLATLLVSLCFLTAYS. Over residues 26 to 36 the composition is skewed to basic and acidic residues; that stretch reads PEEKPKDDRSL. The disordered stretch occupies residues 26–83; the sequence is PEEKPKDDRSLRNNSSMNLLDSPSVSIMALNKKSKKISRKEAEKKKRSSKKKASMTKV. The segment covering 37–50 has biased composition (polar residues); that stretch reads RNNSSMNLLDSPSV. Residues asparagine 38 and asparagine 39 are each glycosylated (N-linked (GlcNAc...) asparagine). Positions 70-79 are enriched in basic residues; sequence KKRSSKKKAS. 5 disulfides stabilise this stretch: cysteine 94/cysteine 109, cysteine 101/cysteine 115, cysteine 108/cysteine 126, cysteine 112/cysteine 133, and cysteine 117/cysteine 124. One can recognise an Agouti domain in the interval 94-133; it reads CVATRDSCKPPAPACCDPCASCQCRFFRSACSCRVLTRTC.

The protein localises to the secreted. Its function is as follows. Involved in the regulation of melanogenesis. The binding of ASP to MC1R precludes alpha-MSH initiated signaling and thus blocks production of cAMP, leading to a down-regulation of eumelanogenesis (brown/black pigment) and thus increasing synthesis of pheomelanin (yellow/red pigment). The polypeptide is Agouti-signaling protein (ASIP) (Equus caballus (Horse)).